Here is a 160-residue protein sequence, read N- to C-terminus: Regulatory protein RecX (160 aa).

It belongs to the RecX family.

The protein localises to the cytoplasm. Its function is as follows. Modulates RecA activity. The polypeptide is Regulatory protein RecX (Xanthomonas oryzae pv. oryzae (strain MAFF 311018)).